The following is a 135-amino-acid chain: Cytochrome c-type biogenesis protein CcmE (135 aa).

Residues 1-8 (MLLLRWKR) are Cytoplasmic-facing. The helical; Signal-anchor for type II membrane protein transmembrane segment at 9-29 (FWFLSLGILLFSGVVSLMLFN) threads the bilayer. Topologically, residues 30–135 (LSESISFFYL…EDFIKSVRGE (106 aa)) are periplasmic. His-118 and Tyr-122 together coordinate heme.

Belongs to the CcmE/CycJ family.

It localises to the cell inner membrane. Its function is as follows. Heme chaperone required for the biogenesis of c-type cytochromes. Transiently binds heme delivered by CcmC and transfers the heme to apo-cytochromes in a process facilitated by CcmF and CcmH. This chain is Cytochrome c-type biogenesis protein CcmE, found in Neorickettsia sennetsu (strain ATCC VR-367 / Miyayama) (Ehrlichia sennetsu).